Consider the following 133-residue polypeptide: Large ribosomal subunit protein uL15 (133 aa).

The disordered stretch occupies residues 1–64 (MGLENLKPAK…QPLQRRLPKI (64 aa)).

Belongs to the universal ribosomal protein uL15 family. In terms of assembly, part of the 50S ribosomal subunit.

Functionally, binds to the 23S rRNA. This chain is Large ribosomal subunit protein uL15, found in Helicobacter pylori (strain Shi470).